Consider the following 284-residue polypeptide: tRNA-cytidine(32) 2-sulfurtransferase (284 aa).

A PP-loop motif motif is present at residues 44 to 49; sequence SGGKDS. Residues C119, C122, and C210 each contribute to the [4Fe-4S] cluster site.

This sequence belongs to the TtcA family. As to quaternary structure, homodimer. Mg(2+) is required as a cofactor. It depends on [4Fe-4S] cluster as a cofactor.

It localises to the cytoplasm. It catalyses the reaction cytidine(32) in tRNA + S-sulfanyl-L-cysteinyl-[cysteine desulfurase] + AH2 + ATP = 2-thiocytidine(32) in tRNA + L-cysteinyl-[cysteine desulfurase] + A + AMP + diphosphate + H(+). The protein operates within tRNA modification. In terms of biological role, catalyzes the ATP-dependent 2-thiolation of cytidine in position 32 of tRNA, to form 2-thiocytidine (s(2)C32). The sulfur atoms are provided by the cysteine/cysteine desulfurase (IscS) system. This is tRNA-cytidine(32) 2-sulfurtransferase from Chromohalobacter salexigens (strain ATCC BAA-138 / DSM 3043 / CIP 106854 / NCIMB 13768 / 1H11).